A 97-amino-acid polypeptide reads, in one-letter code: uncharacterized protein (97 aa).

This is an uncharacterized protein from Schizosaccharomyces pombe (strain 972 / ATCC 24843) (Fission yeast).